The primary structure comprises 254 residues: Mediator of RNA polymerase II transcription subunit 6 (254 aa).

Residues 190–254 (PTFYQTKPGE…PPPEKRARVQ (65 aa)) form a disordered region. A compositionally biased stretch (pro residues) spans 227–245 (PPAPPAPPRPPPQTTPNKP).

Belongs to the Mediator complex subunit 6 family. Component of the Mediator complex.

Its subcellular location is the nucleus. Functionally, component of the Mediator complex, a coactivator involved in the regulated transcription of nearly all RNA polymerase II-dependent genes. Mediator functions as a bridge to convey information from gene-specific regulatory proteins to the basal RNA polymerase II transcription machinery. Mediator is recruited to promoters by direct interactions with regulatory proteins and serves as a scaffold for the assembly of a functional preinitiation complex with RNA polymerase II and the general transcription factors. This Danio rerio (Zebrafish) protein is Mediator of RNA polymerase II transcription subunit 6 (med6).